Here is a 70-residue protein sequence, read N- to C-terminus: Small ribosomal subunit protein bS21B (70 aa).

It belongs to the bacterial ribosomal protein bS21 family.

This is Small ribosomal subunit protein bS21B from Paraburkholderia xenovorans (strain LB400).